Here is a 688-residue protein sequence, read N- to C-terminus: Methionine--tRNA ligase (688 aa).

The 'HIGH' region motif lies at 13 to 23 (PYANGQIHIGH). The Zn(2+) site is built by Cys-144, Cys-147, Cys-157, and Cys-160. The 'KMSKS' region signature appears at 335–339 (KMSKS). Lys-338 provides a ligand contact to ATP. The 107-residue stretch at 582–688 (DFAKIDLRVA…SGAVPGMRIG (107 aa)) folds into the tRNA-binding domain.

Belongs to the class-I aminoacyl-tRNA synthetase family. MetG type 1 subfamily. As to quaternary structure, homodimer. It depends on Zn(2+) as a cofactor.

It is found in the cytoplasm. It carries out the reaction tRNA(Met) + L-methionine + ATP = L-methionyl-tRNA(Met) + AMP + diphosphate. Is required not only for elongation of protein synthesis but also for the initiation of all mRNA translation through initiator tRNA(fMet) aminoacylation. The polypeptide is Methionine--tRNA ligase (Cupriavidus pinatubonensis (strain JMP 134 / LMG 1197) (Cupriavidus necator (strain JMP 134))).